The sequence spans 475 residues: 3-isopropylmalate dehydratase large subunit (475 aa).

[4Fe-4S] cluster contacts are provided by Cys-353, Cys-414, and Cys-417.

It belongs to the aconitase/IPM isomerase family. LeuC type 1 subfamily. In terms of assembly, heterodimer of LeuC and LeuD. Requires [4Fe-4S] cluster as cofactor.

The enzyme catalyses (2R,3S)-3-isopropylmalate = (2S)-2-isopropylmalate. Its pathway is amino-acid biosynthesis; L-leucine biosynthesis; L-leucine from 3-methyl-2-oxobutanoate: step 2/4. Catalyzes the isomerization between 2-isopropylmalate and 3-isopropylmalate, via the formation of 2-isopropylmaleate. The protein is 3-isopropylmalate dehydratase large subunit of Ectopseudomonas mendocina (strain ymp) (Pseudomonas mendocina).